Reading from the N-terminus, the 270-residue chain is Dermonecrotic toxin LhSicTox-alphaIA2aiii (270 aa).

The active site involves histidine 2. Glutamate 22 and aspartate 24 together coordinate Mg(2+). Histidine 38 (nucleophile) is an active-site residue. 2 cysteine pairs are disulfide-bonded: cysteine 42–cysteine 48 and cysteine 44–cysteine 187. Aspartate 82 contributes to the Mg(2+) binding site.

It belongs to the arthropod phospholipase D family. Class II subfamily. The cofactor is Mg(2+). As to expression, expressed by the venom gland.

The protein localises to the secreted. It carries out the reaction an N-(acyl)-sphingosylphosphocholine = an N-(acyl)-sphingosyl-1,3-cyclic phosphate + choline. The enzyme catalyses an N-(acyl)-sphingosylphosphoethanolamine = an N-(acyl)-sphingosyl-1,3-cyclic phosphate + ethanolamine. The catalysed reaction is a 1-acyl-sn-glycero-3-phosphocholine = a 1-acyl-sn-glycero-2,3-cyclic phosphate + choline. It catalyses the reaction a 1-acyl-sn-glycero-3-phosphoethanolamine = a 1-acyl-sn-glycero-2,3-cyclic phosphate + ethanolamine. Its function is as follows. Dermonecrotic toxins cleave the phosphodiester linkage between the phosphate and headgroup of certain phospholipids (sphingolipid and lysolipid substrates), forming an alcohol (often choline) and a cyclic phosphate. This toxin acts on sphingomyelin (SM). It may also act on ceramide phosphoethanolamine (CPE), lysophosphatidylcholine (LPC) and lysophosphatidylethanolamine (LPE), but not on lysophosphatidylserine (LPS), and lysophosphatidylglycerol (LPG). It acts by transphosphatidylation, releasing exclusively cyclic phosphate products as second products. Induces dermonecrosis, hemolysis, increased vascular permeability, edema, inflammatory response, and platelet aggregation. This chain is Dermonecrotic toxin LhSicTox-alphaIA2aiii, found in Loxosceles hirsuta (Recluse spider).